The primary structure comprises 332 residues: Biotin synthase (332 aa).

Residues 53-282 enclose the Radical SAM core domain; it reads HFGKKVKLNM…TKEIRISGGR (230 aa). [4Fe-4S] cluster contacts are provided by Cys-71, Cys-75, and Cys-78. The [2Fe-2S] cluster site is built by Cys-115, Cys-147, Cys-207, and Arg-277.

Belongs to the radical SAM superfamily. Biotin synthase family. Homodimer. [4Fe-4S] cluster serves as cofactor. [2Fe-2S] cluster is required as a cofactor.

It catalyses the reaction (4R,5S)-dethiobiotin + (sulfur carrier)-SH + 2 reduced [2Fe-2S]-[ferredoxin] + 2 S-adenosyl-L-methionine = (sulfur carrier)-H + biotin + 2 5'-deoxyadenosine + 2 L-methionine + 2 oxidized [2Fe-2S]-[ferredoxin]. Its pathway is cofactor biosynthesis; biotin biosynthesis; biotin from 7,8-diaminononanoate: step 2/2. Functionally, catalyzes the conversion of dethiobiotin (DTB) to biotin by the insertion of a sulfur atom into dethiobiotin via a radical-based mechanism. This is Biotin synthase from Bacillus cereus (strain ATCC 10987 / NRS 248).